The sequence spans 376 residues: Putative glutamate--cysteine ligase 2-1 (376 aa).

Belongs to the glutamate--cysteine ligase type 2 family. YbdK subfamily.

It catalyses the reaction L-cysteine + L-glutamate + ATP = gamma-L-glutamyl-L-cysteine + ADP + phosphate + H(+). In terms of biological role, ATP-dependent carboxylate-amine ligase which exhibits weak glutamate--cysteine ligase activity. The protein is Putative glutamate--cysteine ligase 2-1 of Mycobacterium sp. (strain KMS).